Consider the following 603-residue polypeptide: MAKHIVELTDALSNKIAAGEVVERPASVVKELVENAIDAGSTVIDILVEEAGLNKITIIDNGSGIEEEDVATAFLRHATSKIKNEADLFRVHTLGFRGEALPSIASVSHLSMETSTGETKGTTITLEGGKIIEQKSGHARKGTQIEVSQLFFNTPARLKYLKSLPTELGNITDILNRLALAHPDISFRFSHNGKPLLQTNGNGDLRQVIAAIYGVSIARKSIPVKAESLDFKISGYAVLPEVNRSNRNYISTIINGRFIKNFALVKAIQEGYHTLLPIGRFPIIVLQIEMDPIIVDVNVHPAKLEVRLSKEKELGQLISQMIKEAFHKLQLIPDGEISKKQKEVQKSEQIQMSFEENKPQKETPTLFSKSSIPEYVPSDLDAPREDDFILETMPSYEPEQEVEHAEQPKERIPKMYPIGQMHATYIFAQNENGLYIIDQHAAQERIKYEFYREKIGEVSRELQELLVPIVLEFPADEYVRLEEQKAKLEEVGVFLENFGQNSFIIRAHPTWFPKDQEEEMLREIIDEALSAPSISIHKLREDTAIMMSCKKSIKANHYLTTQDMEALLDTLREASDPFTCPHGRPVIIQYSTYELEKMFKRVM.

The protein belongs to the DNA mismatch repair MutL/HexB family.

This protein is involved in the repair of mismatches in DNA. It is required for dam-dependent methyl-directed DNA mismatch repair. May act as a 'molecular matchmaker', a protein that promotes the formation of a stable complex between two or more DNA-binding proteins in an ATP-dependent manner without itself being part of a final effector complex. The protein is DNA mismatch repair protein MutL of Listeria monocytogenes serotype 4a (strain HCC23).